We begin with the raw amino-acid sequence, 275 residues long: Rhamnulose-1-phosphate aldolase (275 aa).

Glutamate 117 is a catalytic residue. Residues histidine 141, histidine 143, and histidine 212 each contribute to the Zn(2+) site.

It belongs to the aldolase class II family. RhaD subfamily. As to quaternary structure, homotetramer. Zn(2+) is required as a cofactor.

The protein localises to the cytoplasm. It catalyses the reaction L-rhamnulose 1-phosphate = (S)-lactaldehyde + dihydroxyacetone phosphate. It functions in the pathway carbohydrate degradation; L-rhamnose degradation; glycerone phosphate from L-rhamnose: step 3/3. Catalyzes the reversible cleavage of L-rhamnulose-1-phosphate to dihydroxyacetone phosphate (DHAP) and L-lactaldehyde. The chain is Rhamnulose-1-phosphate aldolase from Salmonella choleraesuis (strain SC-B67).